We begin with the raw amino-acid sequence, 194 residues long: Early growth response protein 1 (194 aa).

3 consecutive C2H2-type zinc fingers follow at residues 1–18 (CDRR…IRIH), 24–46 (FQCR…IRTH), and 52–74 (FACD…TKIH). A disordered region spans residues 66–88 (ERKRHTKIHLRQKDKKVEKAASV). Residues 69 to 79 (RHTKIHLRQKD) are compositionally biased toward basic residues.

Belongs to the EGR C2H2-type zinc-finger protein family.

The protein localises to the nucleus. It localises to the cytoplasm. Its function is as follows. Transcriptional regulator. Recognizes and binds to the DNA sequence 5'-GCG(T/G)GGGCG-3'(EGR-site) in the promoter region of target genes. Binds double-stranded target DNA, irrespective of the cytosine methylation status. Regulates the transcription of numerous target genes, and thereby plays an important role in regulating the response to growth factors, DNA damage, and ischemia. Plays a role in the regulation of cell survival, proliferation and cell death. Mediates responses to ischemia and hypoxia; regulates the expression of proteins that are involved in inflammatory processes. Plays a role in regulating the expression of circadian clock genes. The polypeptide is Early growth response protein 1 (EGR1) (Coturnix japonica (Japanese quail)).